Consider the following 270-residue polypeptide: 4-hydroxy-tetrahydrodipicolinate reductase (270 aa).

Residues 8–13, D34, 102–104, and 128–131 contribute to the NAD(+) site; these read GALGRM, GTT, and SQNY. The Proton donor/acceptor role is filled by H160. H161 serves as a coordination point for (S)-2,3,4,5-tetrahydrodipicolinate. K164 serves as the catalytic Proton donor. 170–171 contacts (S)-2,3,4,5-tetrahydrodipicolinate; sequence GT.

It belongs to the DapB family.

Its subcellular location is the cytoplasm. It carries out the reaction (S)-2,3,4,5-tetrahydrodipicolinate + NAD(+) + H2O = (2S,4S)-4-hydroxy-2,3,4,5-tetrahydrodipicolinate + NADH + H(+). The catalysed reaction is (S)-2,3,4,5-tetrahydrodipicolinate + NADP(+) + H2O = (2S,4S)-4-hydroxy-2,3,4,5-tetrahydrodipicolinate + NADPH + H(+). It functions in the pathway amino-acid biosynthesis; L-lysine biosynthesis via DAP pathway; (S)-tetrahydrodipicolinate from L-aspartate: step 4/4. Functionally, catalyzes the conversion of 4-hydroxy-tetrahydrodipicolinate (HTPA) to tetrahydrodipicolinate. In Methanococcus vannielii (strain ATCC 35089 / DSM 1224 / JCM 13029 / OCM 148 / SB), this protein is 4-hydroxy-tetrahydrodipicolinate reductase.